We begin with the raw amino-acid sequence, 296 residues long: Lipoyl synthase (296 aa).

Residues Cys-37, Cys-42, Cys-48, Cys-63, Cys-67, Cys-70, and Ser-276 each contribute to the [4Fe-4S] cluster site. The 217-residue stretch at 49-265 (WSKKHTTVMI…ERLAKTKGFL (217 aa)) folds into the Radical SAM core domain.

Belongs to the radical SAM superfamily. Lipoyl synthase family. [4Fe-4S] cluster serves as cofactor.

Its subcellular location is the cytoplasm. It carries out the reaction [[Fe-S] cluster scaffold protein carrying a second [4Fe-4S](2+) cluster] + N(6)-octanoyl-L-lysyl-[protein] + 2 oxidized [2Fe-2S]-[ferredoxin] + 2 S-adenosyl-L-methionine + 4 H(+) = [[Fe-S] cluster scaffold protein] + N(6)-[(R)-dihydrolipoyl]-L-lysyl-[protein] + 4 Fe(3+) + 2 hydrogen sulfide + 2 5'-deoxyadenosine + 2 L-methionine + 2 reduced [2Fe-2S]-[ferredoxin]. It functions in the pathway protein modification; protein lipoylation via endogenous pathway; protein N(6)-(lipoyl)lysine from octanoyl-[acyl-carrier-protein]: step 2/2. In terms of biological role, catalyzes the radical-mediated insertion of two sulfur atoms into the C-6 and C-8 positions of the octanoyl moiety bound to the lipoyl domains of lipoate-dependent enzymes, thereby converting the octanoylated domains into lipoylated derivatives. The protein is Lipoyl synthase of Rickettsia rickettsii (strain Iowa).